A 381-amino-acid chain; its full sequence is 1-deoxy-D-xylulose 5-phosphate reductoisomerase (381 aa).

Positions 13, 14, 15, 40, and 114 each coordinate NADPH. K115 serves as a coordination point for 1-deoxy-D-xylulose 5-phosphate. E116 is a binding site for NADPH. D140 contacts Mn(2+). Positions 141, 142, 166, and 189 each coordinate 1-deoxy-D-xylulose 5-phosphate. Residue E142 participates in Mn(2+) binding. G195 is an NADPH binding site. Residues S202, N207, K208, and E211 each coordinate 1-deoxy-D-xylulose 5-phosphate. Residue E211 coordinates Mn(2+).

Belongs to the DXR family. Mg(2+) is required as a cofactor. Mn(2+) serves as cofactor.

The enzyme catalyses 2-C-methyl-D-erythritol 4-phosphate + NADP(+) = 1-deoxy-D-xylulose 5-phosphate + NADPH + H(+). Its pathway is isoprenoid biosynthesis; isopentenyl diphosphate biosynthesis via DXP pathway; isopentenyl diphosphate from 1-deoxy-D-xylulose 5-phosphate: step 1/6. Catalyzes the NADPH-dependent rearrangement and reduction of 1-deoxy-D-xylulose-5-phosphate (DXP) to 2-C-methyl-D-erythritol 4-phosphate (MEP). In Treponema denticola (strain ATCC 35405 / DSM 14222 / CIP 103919 / JCM 8153 / KCTC 15104), this protein is 1-deoxy-D-xylulose 5-phosphate reductoisomerase.